Consider the following 314-residue polypeptide: tRNA dimethylallyltransferase (314 aa).

13 to 20 serves as a coordination point for ATP; it reads GPTAVGKT. Residue 15-20 participates in substrate binding; sequence TAVGKT. The interval 38-41 is interaction with substrate tRNA; it reads DSMQ.

The protein belongs to the IPP transferase family. Monomer. The cofactor is Mg(2+).

It carries out the reaction adenosine(37) in tRNA + dimethylallyl diphosphate = N(6)-dimethylallyladenosine(37) in tRNA + diphosphate. Catalyzes the transfer of a dimethylallyl group onto the adenine at position 37 in tRNAs that read codons beginning with uridine, leading to the formation of N6-(dimethylallyl)adenosine (i(6)A). The polypeptide is tRNA dimethylallyltransferase (Bacillus subtilis (strain 168)).